The chain runs to 654 residues: Fatty acid photodecarboxylase, chloroplastic (654 aa).

The transit peptide at 1-62 (MASITSRASA…RRGGALSARA (62 aa)) directs the protein to the chloroplast. FAD is bound by residues 93–94 (TA), E114, L162, S166, 170–173 (NATL), and V298. Residues C432, R451, Y466, and Q486 each contribute to the hexadecanoate site. FAD is bound at residue G622.

Belongs to the GMC oxidoreductase family. FAD is required as a cofactor.

It localises to the plastid. The protein resides in the chloroplast. It carries out the reaction a long-chain fatty acid + hnu + H(+) = a long-chain alkane + CO2. It catalyses the reaction hnu + hexadecanoate + H(+) = pentadecane + CO2. The catalysed reaction is hnu + octadecanoate + H(+) = heptadecane + CO2. The enzyme catalyses heptadecanoate + hnu + H(+) = hexadecane + CO2. It carries out the reaction hnu + tetradecanoate + H(+) = tridecane + CO2. It catalyses the reaction octanoate + hnu + H(+) = heptane + CO2. Activated by blue light and repressed by red light. In terms of biological role, catalyzes the decarboxylation of free fatty acids to n-alkanes or n-alkenes in response to blue light. Substrate preference is toward fatty acids with C16 or C17 chains. Converts n-octanoic acid (C8 chain) more efficiently than palmitate (n-hexadecanoic acid, C16 chain) into n-heptane (C7 chain) and n-pentadecane (C15 chain), respectively, partly due to an autocatalytic effect of its n-heptane product. Saturated fatty acids are converted to alkanes, not alkenes. The decarboxylation is initiated through electron abstraction from the fatty acid by the photo-excited FAD. This chain is Fatty acid photodecarboxylase, chloroplastic, found in Chlorella variabilis (Green alga).